Reading from the N-terminus, the 237-residue chain is Putative anti-FlhC(2)FlhD(4) factor YdiV (237 aa).

The 237-residue stretch at 1-237 folds into the EAL domain; sequence MKIFLENLYH…INQITTLVQR (237 aa).

The protein belongs to the YdiV family.

Upon overexpression acts as a novel anti-FlhC(2)FlhD(4) factor, decreasing its DNA-binding activity, able to negatively regulate expression of flagellar class II operons including FliC. This is Putative anti-FlhC(2)FlhD(4) factor YdiV (ydiV) from Escherichia coli (strain K12).